The following is a 101-amino-acid chain: Small ribosomal subunit protein uS14 (101 aa).

Belongs to the universal ribosomal protein uS14 family. Part of the 30S ribosomal subunit. Contacts proteins S3 and S10.

Binds 16S rRNA, required for the assembly of 30S particles and may also be responsible for determining the conformation of the 16S rRNA at the A site. This Cupriavidus pinatubonensis (strain JMP 134 / LMG 1197) (Cupriavidus necator (strain JMP 134)) protein is Small ribosomal subunit protein uS14.